The chain runs to 171 residues: T-cell surface glycoprotein CD3 delta chain (171 aa).

An N-terminal signal peptide occupies residues 1-21 (MEHSTFLSGLVLATLLSQVSP). Residues 22-105 (FKIPVEELED…CVELDPATLA (84 aa)) are Extracellular-facing. A disulfide bond links C37 and C73. N-linked (GlcNAc...) asparagine glycans are attached at residues N38, N54, and N74. Residues 106 to 126 (GIIVTDVIATLLLALGVFCFA) form a helical membrane-spanning segment. The Cytoplasmic segment spans residues 127–171 (GHETGRLSGAADTQALLRNDQVYQPLRDRDDAQYSRLGGNWARNK). The 29-residue stretch at 138–166 (DTQALLRNDQVYQPLRDRDDAQYSRLGGN) folds into the ITAM domain. Residues Y149 and Y160 each carry the phosphotyrosine modification.

The TCR-CD3 complex is composed of a CD3D/CD3E and a CD3G/CD3E heterodimers that preferentially associate with TCRalpha and TCRbeta, respectively, to form TCRalpha/CD3E/CD3G and TCRbeta/CD3G/CD3E trimers. In turn, the hexamer interacts with CD3Z homodimer to form the TCR-CD3 complex. Alternatively, TCRalpha and TCRbeta can be replaced by TCRgamma and TCRdelta. Interacts with coreceptors CD4 and CD8. Post-translationally, phosphorylated on Tyr residues after T-cell receptor triggering by LCK in association with CD4/CD8. As to expression, CD3D is mostly present on T-lymphocytes with its TCR-CD3 partners. Present also in fetal NK-cells.

Its subcellular location is the cell membrane. Part of the TCR-CD3 complex present on T-lymphocyte cell surface that plays an essential role in adaptive immune response. When antigen presenting cells (APCs) activate T-cell receptor (TCR), TCR-mediated signals are transmitted across the cell membrane by the CD3 chains CD3D, CD3E, CD3G and CD3Z. All CD3 chains contain immunoreceptor tyrosine-based activation motifs (ITAMs) in their cytoplasmic domain. Upon TCR engagement, these motifs become phosphorylated by Src family protein tyrosine kinases LCK and FYN, resulting in the activation of downstream signaling pathways. In addition of this role of signal transduction in T-cell activation, CD3D plays an essential role in thymocyte differentiation. Indeed, participates in correct intracellular TCR-CD3 complex assembly and surface expression. In absence of a functional TCR-CD3 complex, thymocytes are unable to differentiate properly. Interacts with CD4 and CD8 and thus serves to establish a functional link between the TCR and coreceptors CD4 and CD8, which is needed for activation and positive selection of CD4 or CD8 T-cells. The sequence is that of T-cell surface glycoprotein CD3 delta chain (CD3D) from Macaca fascicularis (Crab-eating macaque).